The following is a 219-amino-acid chain: MASAGDTQAGPRDAADQNFDYMFKLLLIGNSSVGKTSFLFRYADDSFTPAFVSTVGIDFKVKTVYRHDKRIKLQIWDTAGQERYRTITTAYYRGAMGFLLMYDIANQESFAAVQDWATQIKTYSWDNAQVILVGNKCDLEDERVVPAEDGRRLADDLGFEFFEASAKENINVKQVFERLVDVICEKMNESLEPSSSSGSNGKGPAVGDAPAPQPSSCSC.

A2 carries the N-acetylalanine modification. GDP is bound at residue 29–37 (GNSSVGKTS). S31, S32, V33, G34, K35, T36, S37, P49, and S53 together coordinate GTP. T36 is a Mg(2+) binding site. The short motif at 49 to 58 (PAFVSTVGID) is the Switch 1 element. Residues T54 and D77 each contribute to the Mg(2+) site. G80 is a binding site for GTP. The Switch 2 motif lies at 80–96 (GQERYRTITTAYYRGAM). Phosphothreonine; by LRRK2 is present on T86. The GTP site is built by N135, K136, D138, A166, and K167. Residues 135–138 (NKCD) and 165–167 (SAK) contribute to the GDP site. S190 is modified (phosphoserine). A compositionally biased stretch (low complexity) spans 190–199 (SLEPSSSSGS). A disordered region spans residues 190–219 (SLEPSSSSGSNGKGPAVGDAPAPQPSSCSC). S-geranylgeranyl cysteine attachment occurs at residues C217 and C219. Cysteine methyl ester is present on C219.

Belongs to the small GTPase superfamily. Rab family. Interacts with RIMS1, RIMS2, RPH3A, RPH3AL and RAB3IP. The GTP-bound form interacts with REP15. Interacts with CHM and CHML; phosphorylation at Thr-86 disrupts these interactions. Interacts with MADD (via uDENN domain); the GTP-bound form is preferred for interaction. The cofactor is Mg(2+). Post-translationally, phosphorylation of Thr-86 in the switch II region by LRRK2 prevents the association of RAB regulatory proteins, including CHM and CHML. As to expression, highly expressed in granulocytes of peripheral blood. Constitutively expressed at low levels in all hematopoietic cell lines investigated.

The protein localises to the cell membrane. The enzyme catalyses GTP + H2O = GDP + phosphate + H(+). Regulated by guanine nucleotide exchange factors (GEFs) which promote the exchange of bound GDP for free GTP. Regulated by GTPase activating proteins (GAPs) which increase the GTP hydrolysis activity. Inhibited by GDP dissociation inhibitors (GDIs) which prevent Rab-GDP dissociation. Its function is as follows. The small GTPases Rab are key regulators of intracellular membrane trafficking, from the formation of transport vesicles to their fusion with membranes. Rabs cycle between an inactive GDP-bound form and an active GTP-bound form that is able to recruit to membranes different sets of downstream effectors directly responsible for vesicle formation, movement, tethering and fusion. RAB3D may be involved in the insulin-induced exocytosis of GLUT4-containing vesicles in adipocytes. The chain is Ras-related protein Rab-3D from Homo sapiens (Human).